A 949-amino-acid chain; its full sequence is Glycine dehydrogenase (decarboxylating) (949 aa).

An N6-(pyridoxal phosphate)lysine modification is found at Lys699.

Belongs to the GcvP family. In terms of assembly, the glycine cleavage system is composed of four proteins: P, T, L and H. Pyridoxal 5'-phosphate serves as cofactor.

The enzyme catalyses N(6)-[(R)-lipoyl]-L-lysyl-[glycine-cleavage complex H protein] + glycine + H(+) = N(6)-[(R)-S(8)-aminomethyldihydrolipoyl]-L-lysyl-[glycine-cleavage complex H protein] + CO2. Functionally, the glycine cleavage system catalyzes the degradation of glycine. The P protein binds the alpha-amino group of glycine through its pyridoxal phosphate cofactor; CO(2) is released and the remaining methylamine moiety is then transferred to the lipoamide cofactor of the H protein. This chain is Glycine dehydrogenase (decarboxylating), found in Roseobacter denitrificans (strain ATCC 33942 / OCh 114) (Erythrobacter sp. (strain OCh 114)).